Consider the following 240-residue polypeptide: 31 kDa outer-membrane immunogenic protein (240 aa).

The signal sequence occupies residues 1-19 (MKSVILASIAAMFATSAMA). Residues 48–83 (NAGYAGGKFKHPFSSFDKEDNEQVSGSLDVTAGGFV) form an epitope recognized by the monoclonal antibody A59/10F09/G10 region.

This sequence belongs to the Omp25/RopB family. Oligomeric.

It localises to the cell outer membrane. Its function is as follows. Major outer membrane protein associated with peptidoglycans. May function as a porin. The polypeptide is 31 kDa outer-membrane immunogenic protein (omp31) (Brucella melitensis biotype 1 (strain ATCC 23456 / CCUG 17765 / NCTC 10094 / 16M)).